Here is a 572-residue protein sequence, read N- to C-terminus: Proline--tRNA ligase (572 aa).

Belongs to the class-II aminoacyl-tRNA synthetase family. ProS type 1 subfamily. Homodimer.

It is found in the cytoplasm. It catalyses the reaction tRNA(Pro) + L-proline + ATP = L-prolyl-tRNA(Pro) + AMP + diphosphate. Catalyzes the attachment of proline to tRNA(Pro) in a two-step reaction: proline is first activated by ATP to form Pro-AMP and then transferred to the acceptor end of tRNA(Pro). As ProRS can inadvertently accommodate and process non-cognate amino acids such as alanine and cysteine, to avoid such errors it has two additional distinct editing activities against alanine. One activity is designated as 'pretransfer' editing and involves the tRNA(Pro)-independent hydrolysis of activated Ala-AMP. The other activity is designated 'posttransfer' editing and involves deacylation of mischarged Ala-tRNA(Pro). The misacylated Cys-tRNA(Pro) is not edited by ProRS. This Serratia proteamaculans (strain 568) protein is Proline--tRNA ligase.